The chain runs to 307 residues: Upstream stimulatory factor 1 (307 aa).

Disordered stretches follow at residues 104 to 131 (DDNG…SVGG) and 168 to 207 (QGGS…VERR). Over residues 122 to 131 (PTDSSTSVGG) the composition is skewed to low complexity. Positions 187-207 (DGPRTTRDDKRRAQHNEVERR) are enriched in basic and acidic residues. In terms of domain architecture, bHLH spans 196 to 251 (KRRAQHNEVERRRRDKINNWIVQLSKIIPDCSMESTKTGQSKGGILSKACDYIQEL). Residues 268 to 289 (LQMDNEVLRQQVEDLKNNNLTL) form a leucine-zipper region.

In terms of assembly, efficient DNA binding requires dimerization with another bHLH protein. Binds DNA as a homodimer or a heterodimer. As to expression, oocyte and somatic tissue. Oocytic and somatic forms of this protein exist, probably as a result of post-translational modifications or minor splicing differences.

The protein resides in the nucleus. May act as a regulator of transcription factor IIIA (TFIIIA) gene expression. In Xenopus borealis (Kenyan clawed frog), this protein is Upstream stimulatory factor 1 (usf1).